A 138-amino-acid chain; its full sequence is Putative pre-16S rRNA nuclease (138 aa).

Belongs to the YqgF nuclease family.

The protein localises to the cytoplasm. Its function is as follows. Could be a nuclease involved in processing of the 5'-end of pre-16S rRNA. This is Putative pre-16S rRNA nuclease from Enterobacter sp. (strain 638).